A 71-amino-acid chain; its full sequence is Bacteriocin carnobacteriocin-A (71 aa).

The propeptide occupies 1–18 (MNNVKELSIKEMQQVTGG). The cysteines at positions 40 and 69 are disulfide-linked.

The protein localises to the secreted. In terms of biological role, has antibacterial activity. This is Bacteriocin carnobacteriocin-A (cbnBA) from Carnobacterium maltaromaticum (Carnobacterium piscicola).